The chain runs to 458 residues: ATP synthase subunit beta (458 aa).

148–155 is a binding site for ATP; it reads GGAGVGKT.

This sequence belongs to the ATPase alpha/beta chains family. F-type ATPases have 2 components, CF(1) - the catalytic core - and CF(0) - the membrane proton channel. CF(1) has five subunits: alpha(3), beta(3), gamma(1), delta(1), epsilon(1). CF(0) has three main subunits: a(1), b(2) and c(9-12). The alpha and beta chains form an alternating ring which encloses part of the gamma chain. CF(1) is attached to CF(0) by a central stalk formed by the gamma and epsilon chains, while a peripheral stalk is formed by the delta and b chains.

It localises to the cell inner membrane. The enzyme catalyses ATP + H2O + 4 H(+)(in) = ADP + phosphate + 5 H(+)(out). Functionally, produces ATP from ADP in the presence of a proton gradient across the membrane. The catalytic sites are hosted primarily by the beta subunits. The polypeptide is ATP synthase subunit beta (Mannheimia succiniciproducens (strain KCTC 0769BP / MBEL55E)).